We begin with the raw amino-acid sequence, 359 residues long: Acyl-CoA Delta-9 desaturase (359 aa).

Transmembrane regions (helical) follow at residues 51–71 (VILF…AFTS) and 74–94 (IATT…ITGG). Fe cation-binding residues include His-96, His-101, His-133, His-136, and His-137. A Histidine box-1 motif is present at residues 96–101 (HRLWAH). The Histidine box-2 motif lies at 133–137 (HRVHH). 2 helical membrane passes run 194–214 (YLIL…VYMW) and 222–244 (WFVA…NSAA). Positions 245, 274, 277, and 278 each coordinate Fe cation. The short motif at 274–278 (HNYHH) is the Histidine box-3 element.

Belongs to the fatty acid desaturase type 1 family. Requires Fe(2+) as cofactor.

The protein resides in the membrane. The catalysed reaction is octadecanoyl-CoA + 2 Fe(II)-[cytochrome b5] + O2 + 2 H(+) = (9Z)-octadecenoyl-CoA + 2 Fe(III)-[cytochrome b5] + 2 H2O. It catalyses the reaction hexadecanoyl-CoA + 2 Fe(II)-[cytochrome b5] + O2 + 2 H(+) = (9Z)-hexadecenoyl-CoA + 2 Fe(III)-[cytochrome b5] + 2 H2O. In terms of biological role, catalyzes the formation of a Delta9 double bond, acting on saturated fatty acyl substrates like palmitoyl-CoA (hexadecanoyl-CoA) and stearoyl-CoA (octadecanoyl-CoA) with higher desaturation activity on octadecanoyl-CoA than hexadecanoyl-CoA. The polypeptide is Acyl-CoA Delta-9 desaturase (Acheta domesticus (House cricket)).